A 157-amino-acid polypeptide reads, in one-letter code: Small ribosomal subunit protein uS9 (157 aa).

It belongs to the universal ribosomal protein uS9 family.

The sequence is that of Small ribosomal subunit protein uS9 from Caulobacter vibrioides (strain ATCC 19089 / CIP 103742 / CB 15) (Caulobacter crescentus).